A 154-amino-acid polypeptide reads, in one-letter code: Aspartate carbamoyltransferase regulatory chain (154 aa).

Cys-109, Cys-114, Cys-138, and Cys-141 together coordinate Zn(2+).

It belongs to the PyrI family. In terms of assembly, contains catalytic and regulatory chains. It depends on Zn(2+) as a cofactor.

Its function is as follows. Involved in allosteric regulation of aspartate carbamoyltransferase. This chain is Aspartate carbamoyltransferase regulatory chain, found in Photorhabdus laumondii subsp. laumondii (strain DSM 15139 / CIP 105565 / TT01) (Photorhabdus luminescens subsp. laumondii).